We begin with the raw amino-acid sequence, 81 residues long: Short neurotoxin 2 (81 aa).

A signal peptide spans 1 to 21 (MKTLLLTLVVVTIVCLDLGYT). 4 cysteine pairs are disulfide-bonded: cysteine 24–cysteine 43, cysteine 38–cysteine 60, cysteine 62–cysteine 73, and cysteine 74–cysteine 79.

The protein belongs to the three-finger toxin family. Short-chain subfamily. Type I alpha-neurotoxin sub-subfamily. As to expression, expressed by the venom gland.

It localises to the secreted. Functionally, binds to muscle nicotinic acetylcholine receptor (nAChR) and inhibit acetylcholine from binding to the receptor, thereby impairing neuromuscular transmission. This chain is Short neurotoxin 2, found in Cryptophis nigrescens (Eastern small-eyed snake).